Reading from the N-terminus, the 338-residue chain is Ornithine carbamoyltransferase (338 aa).

The residue at position 2 (Ser-2) is an N-acetylserine. Residues 67-70 (STRT), Arg-118, His-145, and Gln-148 contribute to the carbamoyl phosphate site. L-ornithine is bound by residues Asn-185, Asp-249, Ser-253, and Met-254. The active-site Proton acceptor is the Cys-289. Carbamoyl phosphate contacts are provided by residues 289-290 (CL) and Arg-316.

The protein belongs to the aspartate/ornithine carbamoyltransferase superfamily. OTCase family. In terms of assembly, interacts with CAR1.

It is found in the cytoplasm. It carries out the reaction carbamoyl phosphate + L-ornithine = L-citrulline + phosphate + H(+). The protein operates within amino-acid biosynthesis; L-arginine biosynthesis; L-arginine from L-ornithine and carbamoyl phosphate: step 1/3. With respect to regulation, forms a stable complex with CAR1 in the presence of ornithine and arginine. In this complex CAR1 retains activity, but ARG3 activity is inhibited. This Saccharomyces cerevisiae (strain ATCC 204508 / S288c) (Baker's yeast) protein is Ornithine carbamoyltransferase (ARG3).